The chain runs to 631 residues: Phosphomethylpyrimidine synthase (631 aa).

Substrate-binding positions include N239, M268, Y297, H333, S353–G355, D394–R397, and E433. Zn(2+) is bound at residue H437. Residue Y460 coordinates substrate. H501 is a Zn(2+) binding site. [4Fe-4S] cluster-binding residues include C581, C584, and C589.

The protein belongs to the ThiC family. In terms of assembly, homodimer. [4Fe-4S] cluster serves as cofactor.

It carries out the reaction 5-amino-1-(5-phospho-beta-D-ribosyl)imidazole + S-adenosyl-L-methionine = 4-amino-2-methyl-5-(phosphooxymethyl)pyrimidine + CO + 5'-deoxyadenosine + formate + L-methionine + 3 H(+). It participates in cofactor biosynthesis; thiamine diphosphate biosynthesis. Catalyzes the synthesis of the hydroxymethylpyrimidine phosphate (HMP-P) moiety of thiamine from aminoimidazole ribotide (AIR) in a radical S-adenosyl-L-methionine (SAM)-dependent reaction. The chain is Phosphomethylpyrimidine synthase from Escherichia coli O6:K15:H31 (strain 536 / UPEC).